The following is a 305-amino-acid chain: Glycine--tRNA ligase alpha subunit (305 aa).

This sequence belongs to the class-II aminoacyl-tRNA synthetase family. As to quaternary structure, tetramer of two alpha and two beta subunits.

The protein resides in the cytoplasm. The enzyme catalyses tRNA(Gly) + glycine + ATP = glycyl-tRNA(Gly) + AMP + diphosphate. This Streptococcus uberis (strain ATCC BAA-854 / 0140J) protein is Glycine--tRNA ligase alpha subunit.